Consider the following 146-residue polypeptide: MLLQGTHRIGRMAMLLALADENESPVLSIPKDWKYCTGKVGSMNSQKVVAAMETAAKSNQVIETDVYRETHALYHAIMEALYGVTRGQIQLADVLRTVGLRFAIVRGTPYDGKKEGEWVAVALYGTIGAPVKGSEHEAIGLGINHI.

This sequence belongs to the HutP family. In terms of assembly, homohexamer.

In terms of biological role, antiterminator that binds to cis-acting regulatory sequences on the mRNA in the presence of histidine, thereby suppressing transcription termination and activating the hut operon for histidine utilization. This is Hut operon positive regulatory protein from Bacillus cereus (strain ZK / E33L).